The sequence spans 442 residues: uncharacterized protein (442 aa).

The next 7 membrane-spanning stretches (helical) occupy residues F209–Y229, I247–S267, V284–C304, L308–W328, I342–I362, P374–P394, and F402–F422.

The protein localises to the membrane. This is an uncharacterized protein from Schizosaccharomyces pombe (strain 972 / ATCC 24843) (Fission yeast).